Here is a 538-residue protein sequence, read N- to C-terminus: T-complex protein 1 subunit epsilon (538 aa).

This sequence belongs to the TCP-1 chaperonin family. As to quaternary structure, heterooligomeric complex of about 850 to 900 kDa that forms two stacked rings, 12 to 16 nm in diameter.

The protein localises to the cytoplasm. Molecular chaperone; assists the folding of proteins upon ATP hydrolysis. Known to play a role, in vitro, in the folding of actin and tubulin. The protein is T-complex protein 1 subunit epsilon (cct5) of Dictyostelium discoideum (Social amoeba).